Consider the following 480-residue polypeptide: UDP-glucose 6-dehydrogenase 2 (480 aa).

Residues 8-13, Asp33, Arg38, 86-90, 127-128, and Glu161 contribute to the NAD(+) site; these read GAGYVG, VNTPT, and ST. Substrate is bound by residues 157 to 161, 216 to 223, and 256 to 269; these read EFLAE, KLAANAFL, and RIGP…VGFG. The active-site Nucleophile is the Cys272. NAD(+) is bound at residue 272 to 275; the sequence is CFQK. Substrate is bound at residue 334-335; the sequence is FK. Arg342 contributes to the NAD(+) binding site. Arg447 contacts substrate.

Belongs to the UDP-glucose/GDP-mannose dehydrogenase family. Preferentially expressed in roots.

The catalysed reaction is UDP-alpha-D-glucose + 2 NAD(+) + H2O = UDP-alpha-D-glucuronate + 2 NADH + 3 H(+). Its pathway is nucleotide-sugar biosynthesis; UDP-alpha-D-glucuronate biosynthesis; UDP-alpha-D-glucuronate from UDP-alpha-D-glucose: step 1/1. Its activity is regulated as follows. Inhibited by UDP-xylose. Involved in the biosynthesis of UDP-glucuronic acid (UDP-GlcA), providing nucleotide sugars for cell-wall polymers. Required for the formation of cell wall ingrowths on the outer cell walls of nematode-induced syncytia. The chain is UDP-glucose 6-dehydrogenase 2 (UGD2) from Arabidopsis thaliana (Mouse-ear cress).